We begin with the raw amino-acid sequence, 114 residues long: Putative pterin-4-alpha-carbinolamine dehydratase (114 aa).

Belongs to the pterin-4-alpha-carbinolamine dehydratase family.

The catalysed reaction is (4aS,6R)-4a-hydroxy-L-erythro-5,6,7,8-tetrahydrobiopterin = (6R)-L-erythro-6,7-dihydrobiopterin + H2O. This is Putative pterin-4-alpha-carbinolamine dehydratase from Chlorobium luteolum (strain DSM 273 / BCRC 81028 / 2530) (Pelodictyon luteolum).